A 258-amino-acid chain; its full sequence is Imidazole glycerol phosphate synthase subunit HisF (258 aa).

Active-site residues include aspartate 11 and aspartate 130.

Belongs to the HisA/HisF family. As to quaternary structure, heterodimer of HisH and HisF.

The protein localises to the cytoplasm. It carries out the reaction 5-[(5-phospho-1-deoxy-D-ribulos-1-ylimino)methylamino]-1-(5-phospho-beta-D-ribosyl)imidazole-4-carboxamide + L-glutamine = D-erythro-1-(imidazol-4-yl)glycerol 3-phosphate + 5-amino-1-(5-phospho-beta-D-ribosyl)imidazole-4-carboxamide + L-glutamate + H(+). It functions in the pathway amino-acid biosynthesis; L-histidine biosynthesis; L-histidine from 5-phospho-alpha-D-ribose 1-diphosphate: step 5/9. In terms of biological role, IGPS catalyzes the conversion of PRFAR and glutamine to IGP, AICAR and glutamate. The HisF subunit catalyzes the cyclization activity that produces IGP and AICAR from PRFAR using the ammonia provided by the HisH subunit. This Shigella boydii serotype 4 (strain Sb227) protein is Imidazole glycerol phosphate synthase subunit HisF.